A 404-amino-acid polypeptide reads, in one-letter code: Cysteine desulfurase IscS (404 aa).

Residues 75–76 (AT), Asn-155, Gln-183, and 203–205 (SAH) contribute to the pyridoxal 5'-phosphate site. The residue at position 206 (Lys-206) is an N6-(pyridoxal phosphate)lysine. Thr-243 contacts pyridoxal 5'-phosphate. The active-site Cysteine persulfide intermediate is Cys-328. Position 328 (Cys-328) interacts with [2Fe-2S] cluster.

Belongs to the class-V pyridoxal-phosphate-dependent aminotransferase family. NifS/IscS subfamily. Homodimer. Forms a heterotetramer with IscU, interacts with other sulfur acceptors. Pyridoxal 5'-phosphate serves as cofactor.

It is found in the cytoplasm. The enzyme catalyses (sulfur carrier)-H + L-cysteine = (sulfur carrier)-SH + L-alanine. Its pathway is cofactor biosynthesis; iron-sulfur cluster biosynthesis. Functionally, master enzyme that delivers sulfur to a number of partners involved in Fe-S cluster assembly, tRNA modification or cofactor biosynthesis. Catalyzes the removal of elemental sulfur atoms from cysteine to produce alanine. Functions as a sulfur delivery protein for Fe-S cluster synthesis onto IscU, an Fe-S scaffold assembly protein, as well as other S acceptor proteins. This is Cysteine desulfurase IscS from Pseudomonas aeruginosa (strain UCBPP-PA14).